Reading from the N-terminus, the 562-residue chain is MRSDMIKKGDHQAPARSLLHATGALKSPTDMNKPFVAICNSYIDIVPGHVHLRELADIAKEAIREAGAIPFEFNTIGVDDGIAMGHIGMRYSLPSREIIADAAETVINAHWFDGVFYIPNCDKITPGMILAAMRTNVPAIFCSGGPMKAGLSAHGKALTLSSMFEAVGAFKKGSISKEEFLDMEQNACPTCGSCAGMFTANSMNCLMEVLGLALPYNGTALAVSDQRREMIRQAAFKLVENIKNDLKPRDIVTREAIDDAFALDMAMGGSTNTVLHTLAIANEAGIDYDLERINAIAKRTPYLSKIAPSSSYSMHDVHEAGGVPAIINELMKKDGTLHPDRITVTGKTLRENNEGKEIKNFDVIHPLDAPYDAQGGLSILFGNIAPKGAVIKVGGVDPSIKTFTGKAICFNSHDEAVEAIDNRTVRAGHVVVIRYEGPKGGPGMPEMLAPTSSIVGRGLGKDVALITDGRFSGATRGIAVGHISPEAASGGPIALIEDGDEITIDLTNRTLNVNQPEDVLARRRESLTPFKAKVKTGYLARYTALVTSANTGGVMQVPENLI.

Aspartate 80 provides a ligand contact to Mg(2+). Cysteine 121 is a [2Fe-2S] cluster binding site. Mg(2+) contacts are provided by aspartate 122 and lysine 123. Lysine 123 carries the N6-carboxylysine modification. Cysteine 194 provides a ligand contact to [2Fe-2S] cluster. A Mg(2+)-binding site is contributed by glutamate 446. Serine 472 (proton acceptor) is an active-site residue.

It belongs to the IlvD/Edd family. Homodimer. The cofactor is [2Fe-2S] cluster. Mg(2+) serves as cofactor.

It carries out the reaction (2R)-2,3-dihydroxy-3-methylbutanoate = 3-methyl-2-oxobutanoate + H2O. It catalyses the reaction (2R,3R)-2,3-dihydroxy-3-methylpentanoate = (S)-3-methyl-2-oxopentanoate + H2O. It functions in the pathway amino-acid biosynthesis; L-isoleucine biosynthesis; L-isoleucine from 2-oxobutanoate: step 3/4. The protein operates within amino-acid biosynthesis; L-valine biosynthesis; L-valine from pyruvate: step 3/4. Functions in the biosynthesis of branched-chain amino acids. Catalyzes the dehydration of (2R,3R)-2,3-dihydroxy-3-methylpentanoate (2,3-dihydroxy-3-methylvalerate) into 2-oxo-3-methylpentanoate (2-oxo-3-methylvalerate) and of (2R)-2,3-dihydroxy-3-methylbutanoate (2,3-dihydroxyisovalerate) into 2-oxo-3-methylbutanoate (2-oxoisovalerate), the penultimate precursor to L-isoleucine and L-valine, respectively. The protein is Dihydroxy-acid dehydratase of Staphylococcus aureus (strain bovine RF122 / ET3-1).